A 220-amino-acid polypeptide reads, in one-letter code: Ribonuclease P protein component 3 (220 aa).

Belongs to the eukaryotic/archaeal RNase P protein component 3 family. In terms of assembly, consists of a catalytic RNA component and at least 4-5 protein subunits.

The protein localises to the cytoplasm. It carries out the reaction Endonucleolytic cleavage of RNA, removing 5'-extranucleotides from tRNA precursor.. Functionally, part of ribonuclease P, a protein complex that generates mature tRNA molecules by cleaving their 5'-ends. This Thermococcus kodakarensis (strain ATCC BAA-918 / JCM 12380 / KOD1) (Pyrococcus kodakaraensis (strain KOD1)) protein is Ribonuclease P protein component 3.